The following is a 629-amino-acid chain: Translation initiation factor IF-2 (629 aa).

Residues 1–20 form a disordered region; sequence MAKNIKTNKKPQQVNKKEMS. Residues 127–297 form the tr-type G domain; sequence HRAPIVTIMG…LLIAEMQDYK (171 aa). A G1 region spans residues 136 to 143; that stretch reads GHVDHGKT. Position 136 to 143 (136 to 143) interacts with GTP; that stretch reads GHVDHGKT. Positions 161 to 165 are G2; that stretch reads GITQA. The interval 183-186 is G3; that stretch reads DTPG. Residues 183–187 and 237–240 each bind GTP; these read DTPGH and NKCD. A G4 region spans residues 237-240; it reads NKCD. The interval 273-275 is G5; that stretch reads SAK.

Belongs to the TRAFAC class translation factor GTPase superfamily. Classic translation factor GTPase family. IF-2 subfamily.

It is found in the cytoplasm. Functionally, one of the essential components for the initiation of protein synthesis. Protects formylmethionyl-tRNA from spontaneous hydrolysis and promotes its binding to the 30S ribosomal subunits. Also involved in the hydrolysis of GTP during the formation of the 70S ribosomal complex. In Mesoplasma florum (strain ATCC 33453 / NBRC 100688 / NCTC 11704 / L1) (Acholeplasma florum), this protein is Translation initiation factor IF-2.